A 94-amino-acid chain; its full sequence is Exodeoxyribonuclease 7 small subunit (94 aa).

It belongs to the XseB family. As to quaternary structure, heterooligomer composed of large and small subunits.

The protein localises to the cytoplasm. The enzyme catalyses Exonucleolytic cleavage in either 5'- to 3'- or 3'- to 5'-direction to yield nucleoside 5'-phosphates.. Bidirectionally degrades single-stranded DNA into large acid-insoluble oligonucleotides, which are then degraded further into small acid-soluble oligonucleotides. This chain is Exodeoxyribonuclease 7 small subunit, found in Ralstonia nicotianae (strain ATCC BAA-1114 / GMI1000) (Ralstonia solanacearum).